The following is an 807-amino-acid chain: Glycerol-3-phosphate acyltransferase (807 aa).

Residues 305-310 (CHRSHM) carry the HXXXXD motif motif.

It belongs to the GPAT/DAPAT family.

It is found in the cell inner membrane. The catalysed reaction is sn-glycerol 3-phosphate + an acyl-CoA = a 1-acyl-sn-glycero-3-phosphate + CoA. Its pathway is phospholipid metabolism; CDP-diacylglycerol biosynthesis; CDP-diacylglycerol from sn-glycerol 3-phosphate: step 1/3. The polypeptide is Glycerol-3-phosphate acyltransferase (Aliivibrio fischeri (strain MJ11) (Vibrio fischeri)).